Consider the following 393-residue polypeptide: MSMFGTATRDNATRVLLLGSGELGKEVAIECQRLGLEVIACDRYADAPAMQVAHRSHVFDMLDADALQQVIDLEKPHFVVPEIEAIATSKLVELEAQGLNVVPTANATRLTMNREGIRRLAAEELGLPTSAYQFADSYESFAAAVETIGLPCVCKPVMSSSGKGQSVIRTPEQIEAAWQYAQQGGRSGAGRVIVEGFVDFDYEITLLTVRAVDGVHFCAPIGHRQEDGDYRESWQPQVMSENAIKAAEYVAEQVVNALGGYGLFGVELFVKGDKVIFNEVSPRPHDTGMVTLISQELSEFALHVRAFTGLPIGQIVQYGPSASAAILGQGQSQNIQFNGLDDALSIPHTQVRLFGKPDIAGRRRLGVALSRGKTTQEATDRAIECAKAVKIHY.

Residues 22-23 (EL) and Glu-82 contribute to the N(1)-(5-phospho-beta-D-ribosyl)glycinamide site. Residues Arg-114, Lys-155, 160–165 (SSGKGQ), 195–198 (EGFV), and Glu-203 contribute to the ATP site. Residues 119-308 (RLAAEELGLP…EFALHVRAFT (190 aa)) form the ATP-grasp domain. 2 residues coordinate Mg(2+): Glu-267 and Glu-279. N(1)-(5-phospho-beta-D-ribosyl)glycinamide-binding positions include Asp-286, Lys-356, and 363–364 (RR).

The protein belongs to the PurK/PurT family. Homodimer.

It catalyses the reaction N(1)-(5-phospho-beta-D-ribosyl)glycinamide + formate + ATP = N(2)-formyl-N(1)-(5-phospho-beta-D-ribosyl)glycinamide + ADP + phosphate + H(+). The protein operates within purine metabolism; IMP biosynthesis via de novo pathway; N(2)-formyl-N(1)-(5-phospho-D-ribosyl)glycinamide from N(1)-(5-phospho-D-ribosyl)glycinamide (formate route): step 1/1. In terms of biological role, involved in the de novo purine biosynthesis. Catalyzes the transfer of formate to 5-phospho-ribosyl-glycinamide (GAR), producing 5-phospho-ribosyl-N-formylglycinamide (FGAR). Formate is provided by PurU via hydrolysis of 10-formyl-tetrahydrofolate. This is Formate-dependent phosphoribosylglycinamide formyltransferase from Vibrio cholerae serotype O1 (strain M66-2).